The chain runs to 108 residues: Cuticle protein AM1199 (108 aa).

Position 1 is a pyrrolidone carboxylic acid (Gln-1). Residues 26–91 (DGNFGYDFET…AESPLIPTPH (66 aa)) enclose the Chitin-binding type R&amp;R domain. The O-linked (HexNAc) threonine glycan is linked to Thr-89.

As to expression, arthrodial membrane.

The protein is Cuticle protein AM1199 of Cancer pagurus (Rock crab).